The chain runs to 156 residues: Transcription antitermination protein NusB (156 aa).

The protein belongs to the NusB family.

Involved in transcription antitermination. Required for transcription of ribosomal RNA (rRNA) genes. Binds specifically to the boxA antiterminator sequence of the ribosomal RNA (rrn) operons. This chain is Transcription antitermination protein NusB, found in Bartonella tribocorum (strain CIP 105476 / IBS 506).